A 274-amino-acid polypeptide reads, in one-letter code: Ribose-5-phosphate isomerase (274 aa).

The protein belongs to the ribose 5-phosphate isomerase family.

It is found in the cytoplasm. The enzyme catalyses aldehydo-D-ribose 5-phosphate = D-ribulose 5-phosphate. Its pathway is carbohydrate degradation; pentose phosphate pathway; D-ribose 5-phosphate from D-ribulose 5-phosphate (non-oxidative stage): step 1/1. The chain is Ribose-5-phosphate isomerase (RKI1) from Kluyveromyces lactis (strain ATCC 8585 / CBS 2359 / DSM 70799 / NBRC 1267 / NRRL Y-1140 / WM37) (Yeast).